Reading from the N-terminus, the 348-residue chain is Centromere protein N (348 aa).

Belongs to the CENP-N/CHL4 family.

The protein localises to the nucleus. It is found in the chromosome. Its subcellular location is the centromere. In terms of biological role, probable component of a centromeric complex involved in assembly of kinetochore proteins, mitotic progression and chromosome segregation. The protein is Centromere protein N (cenpn) of Xenopus tropicalis (Western clawed frog).